The primary structure comprises 272 residues: Putative phosphoenolpyruvate synthase regulatory protein (272 aa).

152-159 is an ADP binding site; the sequence is GVSRCGKT.

This sequence belongs to the pyruvate, phosphate/water dikinase regulatory protein family. PSRP subfamily.

The enzyme catalyses [pyruvate, water dikinase] + ADP = [pyruvate, water dikinase]-phosphate + AMP + H(+). The catalysed reaction is [pyruvate, water dikinase]-phosphate + phosphate + H(+) = [pyruvate, water dikinase] + diphosphate. Functionally, bifunctional serine/threonine kinase and phosphorylase involved in the regulation of the phosphoenolpyruvate synthase (PEPS) by catalyzing its phosphorylation/dephosphorylation. The sequence is that of Putative phosphoenolpyruvate synthase regulatory protein from Stutzerimonas stutzeri (strain A1501) (Pseudomonas stutzeri).